The primary structure comprises 748 residues: Transcription factor FBD3 (748 aa).

Positions 1-10 (MPEQPRRPSD) are enriched in basic and acidic residues. Positions 1–26 (MPEQPRRPSDQEQNQSETGPPTNKRR) are disordered. Residues 11-21 (QEQNQSETGPP) show a composition bias toward polar residues. Positions 32–59 (CNACRSRKSRCDGQRPSCSSCLSLGFDC) form a DNA-binding region, zn(2)-C6 fungal-type. Disordered regions lie at residues 116 to 160 (GTIN…EGIP) and 417 to 438 (IPDE…TSGN). Positions 131 to 141 (APTKASAPSGA) are enriched in low complexity. The span at 429–438 (SGRSPATSGN) shows a compositional bias: polar residues.

It is found in the nucleus. In terms of biological role, transcription factor; part of the Fusarium detoxification of benzoxazolinone cluster 2 (FDB2) involved in the degradation of benzoxazolinones produced by the host plant. Maize, wheat, and rye produce the 2 benzoxazinone phytoanticipins 2,4-dihy-droxy-7-methoxy-1,4-benzoxazin-3-one (DIMBOA) and 2,4-dihydroxy-1,4-benzoxazin-3-one (DIBOA) that, due to their inherent instability once released, spontaneously degrade to the more stable corresponding benzoxazolinones, 6-methoxy-2-benzoxazolinone (MBOA) and 2-benzoxazolinone (BOA), respectively. FDB3 is not essentiel, but contributes to efficient BOA biotransformation. The sequence is that of Transcription factor FBD3 from Gibberella moniliformis (strain M3125 / FGSC 7600) (Maize ear and stalk rot fungus).